The primary structure comprises 98 residues: Large ribosomal subunit protein bL27 (98 aa).

Positions 1–22 are disordered; sequence MAHKKGTGSTRNGRDSNAQRLG. The segment covering 7 to 19 has biased composition (polar residues); sequence TGSTRNGRDSNAQ.

Belongs to the bacterial ribosomal protein bL27 family.

The protein is Large ribosomal subunit protein bL27 of Nostoc punctiforme (strain ATCC 29133 / PCC 73102).